The sequence spans 508 residues: Histidine ammonia-lyase (508 aa).

Positions 145–147 (ASG) form a cross-link, 5-imidazolinone (Ala-Gly). S146 carries the 2,3-didehydroalanine (Ser) modification.

The protein belongs to the PAL/histidase family. Post-translationally, contains an active site 4-methylidene-imidazol-5-one (MIO), which is formed autocatalytically by cyclization and dehydration of residues Ala-Ser-Gly.

Its subcellular location is the cytoplasm. The catalysed reaction is L-histidine = trans-urocanate + NH4(+). It participates in amino-acid degradation; L-histidine degradation into L-glutamate; N-formimidoyl-L-glutamate from L-histidine: step 1/3. The sequence is that of Histidine ammonia-lyase from Myxococcus xanthus (strain DK1622).